The following is a 525-amino-acid chain: Light-independent protochlorophyllide reductase subunit B (525 aa).

A [4Fe-4S] cluster-binding site is contributed by aspartate 36. Aspartate 286 serves as the catalytic Proton donor. 421-422 (GL) serves as a coordination point for substrate.

It belongs to the ChlB/BchB/BchZ family. Protochlorophyllide reductase is composed of three subunits; ChlL, ChlN and ChlB. Forms a heterotetramer of two ChlB and two ChlN subunits. The cofactor is [4Fe-4S] cluster.

The enzyme catalyses chlorophyllide a + oxidized 2[4Fe-4S]-[ferredoxin] + 2 ADP + 2 phosphate = protochlorophyllide a + reduced 2[4Fe-4S]-[ferredoxin] + 2 ATP + 2 H2O. Its pathway is porphyrin-containing compound metabolism; chlorophyll biosynthesis (light-independent). In terms of biological role, component of the dark-operative protochlorophyllide reductase (DPOR) that uses Mg-ATP and reduced ferredoxin to reduce ring D of protochlorophyllide (Pchlide) to form chlorophyllide a (Chlide). This reaction is light-independent. The NB-protein (ChlN-ChlB) is the catalytic component of the complex. The sequence is that of Light-independent protochlorophyllide reductase subunit B from Prochlorococcus marinus (strain NATL2A).